Consider the following 245-residue polypeptide: Tryptophan synthase alpha chain (245 aa).

Residues glutamate 37 and aspartate 48 each act as proton acceptor in the active site.

Belongs to the TrpA family. As to quaternary structure, tetramer of two alpha and two beta chains.

It carries out the reaction (1S,2R)-1-C-(indol-3-yl)glycerol 3-phosphate + L-serine = D-glyceraldehyde 3-phosphate + L-tryptophan + H2O. The protein operates within amino-acid biosynthesis; L-tryptophan biosynthesis; L-tryptophan from chorismate: step 5/5. Functionally, the alpha subunit is responsible for the aldol cleavage of indoleglycerol phosphate to indole and glyceraldehyde 3-phosphate. The chain is Tryptophan synthase alpha chain from Saccharolobus solfataricus (strain ATCC 35092 / DSM 1617 / JCM 11322 / P2) (Sulfolobus solfataricus).